The primary structure comprises 618 residues: Matrix metalloproteinase-24 (618 aa).

Residues 1–41 form the signal peptide; sequence MPRSRGGRAAPGQASRWSGWRAPGRLLPLLPALCCLAAAAG. Positions 42 to 128 are excised as a propeptide; that stretch reads AGKPAGADAP…HLSRRRRNKR (87 aa). Topologically, residues 42-575 are extracellular; that stretch reads AGKPAGADAP…IDDVPGSVNA (534 aa). The Cysteine switch motif lies at 110-117; sequence PRCGVPDH. 2 residues coordinate Zn(2+): cysteine 112 and histidine 255. Glutamate 256 is an active-site residue. Positions 259 and 265 each coordinate Zn(2+). The segment at 296-352 is disordered; the sequence is QKIYGPPAEPLEPTRPLPTLPVRRIHSPSERKHERHPRPPRPPLGDRPSTPGAKPNI. A compositionally biased stretch (pro residues) spans 302–314; that stretch reads PAEPLEPTRPLPT. Hemopexin repeat units follow at residues 350–398, 399–444, 446–494, and 495–542; these read PNIC…WKGL, PARI…GSCL, REGI…KGIP, and QAPQ…WMGC. Cysteine 353 and cysteine 542 are joined by a disulfide. A helical transmembrane segment spans residues 576 to 596; sequence VAVVVPCTLSLCLLVLLYTIF. The Cytoplasmic segment spans residues 597 to 618; it reads QFKNKAGPQPVTYYKRPVQEWV. The short motif at 616-618 is the PDZ-binding element; sequence EWV.

It belongs to the peptidase M10A family. As to quaternary structure, interacts with GRIP1 and GRIP2. Interacts (via PDZ-binding motif) with APBA3 (via PDZ domain). It depends on Zn(2+) as a cofactor. Ca(2+) is required as a cofactor. Cleaved by a furin endopeptidase in the trans-Golgi network. Mainly expressed in neuronal cells of both central and peripheral nervous systems. Expressed by CGRP-containing peptidergic nociceptors in dorsal root ganglia. Expressed in adult neural stem cell and ependymocytes. Expressed at low level in testis.

The protein resides in the cell membrane. The protein localises to the golgi apparatus. Its subcellular location is the trans-Golgi network membrane. It is found in the secreted. It localises to the extracellular space. The protein resides in the extracellular matrix. In terms of biological role, metalloprotease that mediates cleavage of N-cadherin (CDH2) and acts as a regulator of neuro-immune interactions and neural stem cell quiescence. Involved in cell-cell interactions between nociceptive neurites and mast cells, possibly by mediating cleavage of CDH2, thereby acting as a mediator of peripheral thermal nociception and inflammatory hyperalgesia. Key regulator of neural stem cells quiescence by mediating cleavage of CDH2, affecting CDH2-mediated anchorage of neural stem cells to ependymocytes in the adult subependymal zone, leading to modulate their quiescence. May play a role in axonal growth. Able to activate progelatinase A. May also be a proteoglycanase involved in degradation of proteoglycans, such as dermatan sulfate and chondroitin sulfate proteoglycans. Cleaves partially fibronectin, but not collagen type I, nor laminin. The chain is Matrix metalloproteinase-24 (Mmp24) from Mus musculus (Mouse).